We begin with the raw amino-acid sequence, 247 residues long: Adenosylcobinamide-GDP ribazoletransferase (247 aa).

5 helical membrane passes run 34 to 54 (IITF…VFMV), 59 to 79 (CGVP…TGGF), 113 to 133 (GGLA…ELAL), 138 to 158 (ILAL…LLMY), and 194 to 214 (VLLP…AIFI).

This sequence belongs to the CobS family. The cofactor is Mg(2+).

The protein localises to the cell inner membrane. It catalyses the reaction alpha-ribazole + adenosylcob(III)inamide-GDP = adenosylcob(III)alamin + GMP + H(+). The catalysed reaction is alpha-ribazole 5'-phosphate + adenosylcob(III)inamide-GDP = adenosylcob(III)alamin 5'-phosphate + GMP + H(+). The protein operates within cofactor biosynthesis; adenosylcobalamin biosynthesis; adenosylcobalamin from cob(II)yrinate a,c-diamide: step 7/7. Joins adenosylcobinamide-GDP and alpha-ribazole to generate adenosylcobalamin (Ado-cobalamin). Also synthesizes adenosylcobalamin 5'-phosphate from adenosylcobinamide-GDP and alpha-ribazole 5'-phosphate. The sequence is that of Adenosylcobinamide-GDP ribazoletransferase from Shigella boydii serotype 4 (strain Sb227).